Here is a 397-residue protein sequence, read N- to C-terminus: tRNA (guanine-N(7)-)-methyltransferase non-catalytic subunit wuho (397 aa).

WD repeat units lie at residues 75 to 115, 163 to 202, 206 to 244, and 303 to 343; these read KVEV…AQLL, GHLS…DIHS, GHKE…ELLL, and AGTW…RASG.

Belongs to the WD repeat TRM82 family. In terms of assembly, forms a heterodimer with the catalytic subunit Mettl1. Interacts with mei-P26 and weakly interacts with bgcn; required for the function or formation of the mei-P26-bgcn-bam-sxl complex. Interacts with nanos; may be involved in mei-P26-dependent derepression of the BMP signaling pathway. Interacts with Myc; the interaction may be mediated by mei-P26 and may be involved in the regulation of ribosome biogenesis. As to expression, in testis, it is present at high level in hub cells, a niche for germline stem cells of testis. Ubiquitously expressed in all testicular cells throughout spermatogenesis. Ubiquitously expressed in all germline and somatic cells of the ovary.

Its subcellular location is the nucleus. The protein localises to the cytoplasm. It participates in tRNA modification; N(7)-methylguanine-tRNA biosynthesis. Required for the Mettl1-dependent formation of N(7)-methylguanine at position 46 (m7G46) in tRNA. In the Mettl1-wuho methyltransferase complex, it is required to stabilize and induce conformational changes of the catalytic subunit. Required for binding of nanos mRNA and repression of translation by the mei-P26-bgcn-bam-sxl complex. May cooperate with mei-P26 and nanos to derepress the BMP signaling pathway. May cooperate with mei-P26 to suppress expression of a subset of microRNAs. May cooperate with mei-P26 to regulate bam expression levels in germline cells during gametogenesis. Required to promote mitosis to meiosis transition during gametogenesis. May regulate germline cell division in part by regulating ribosome biogenesis. The protein is tRNA (guanine-N(7)-)-methyltransferase non-catalytic subunit wuho of Drosophila persimilis (Fruit fly).